A 122-amino-acid chain; its full sequence is Large ribosomal subunit protein uL14 (122 aa).

It belongs to the universal ribosomal protein uL14 family. Part of the 50S ribosomal subunit. Forms a cluster with proteins L3 and L19. In the 70S ribosome, L14 and L19 interact and together make contacts with the 16S rRNA in bridges B5 and B8.

In terms of biological role, binds to 23S rRNA. Forms part of two intersubunit bridges in the 70S ribosome. This chain is Large ribosomal subunit protein uL14, found in Paramagnetospirillum magneticum (strain ATCC 700264 / AMB-1) (Magnetospirillum magneticum).